The sequence spans 78 residues: CDC42 small effector protein 1 (78 aa).

Residues cysteine 10 and cysteine 11 are each lipidated (S-palmitoyl cysteine). Residues 30 to 43 (IGEPMNFVHLTHIG) form the CRIB domain.

The protein belongs to the CDC42SE/SPEC family.

It is found in the cytoplasm. The protein resides in the cytoskeleton. It localises to the cell membrane. Its function is as follows. Probably involved in the organization of the actin cytoskeleton by acting downstream of CDC42, inducing actin filament assembly. In Gallus gallus (Chicken), this protein is CDC42 small effector protein 1 (CDC42SE1).